A 61-amino-acid chain; its full sequence is Large ribosomal subunit protein bL32 (61 aa).

This sequence belongs to the bacterial ribosomal protein bL32 family.

This is Large ribosomal subunit protein bL32 from Cytophaga hutchinsonii (strain ATCC 33406 / DSM 1761 / CIP 103989 / NBRC 15051 / NCIMB 9469 / D465).